Consider the following 115-residue polypeptide: NAD(P)H-quinone oxidoreductase subunit M (115 aa).

The protein belongs to the complex I NdhM subunit family. NDH-1 can be composed of about 15 different subunits; different subcomplexes with different compositions have been identified which probably have different functions.

Its subcellular location is the cellular thylakoid membrane. It carries out the reaction a plastoquinone + NADH + (n+1) H(+)(in) = a plastoquinol + NAD(+) + n H(+)(out). The catalysed reaction is a plastoquinone + NADPH + (n+1) H(+)(in) = a plastoquinol + NADP(+) + n H(+)(out). Functionally, NDH-1 shuttles electrons from an unknown electron donor, via FMN and iron-sulfur (Fe-S) centers, to quinones in the respiratory and/or the photosynthetic chain. The immediate electron acceptor for the enzyme in this species is believed to be plastoquinone. Couples the redox reaction to proton translocation, and thus conserves the redox energy in a proton gradient. Cyanobacterial NDH-1 also plays a role in inorganic carbon-concentration. This chain is NAD(P)H-quinone oxidoreductase subunit M, found in Parasynechococcus marenigrum (strain WH8102).